The chain runs to 190 residues: Nuclear transcription factor Y subunit A-7 (190 aa).

The interval 1-33 (MTSSIHELSDNIGSHEKQEQRDSHFQPPIPSAR) is disordered. A compositionally biased stretch (basic and acidic residues) spans 7–24 (ELSDNIGSHEKQEQRDSH). The Subunit association domain (SAD) signature appears at 103–126 (FVNAKQYHGILRRRQSRARLESQN). The segment at residues 133–158 (KPYLHESRHLHAIRRPRGCGGRFLNA) is a DNA-binding region (NFYA/HAP2-type). The disordered stretch occupies residues 147 to 190 (RPRGCGGRFLNAKKEDEHHEDSSHEEKSNLSAGKSAMAASSGTS). Over residues 158–174 (AKKEDEHHEDSSHEEKS) the composition is skewed to basic and acidic residues. Over residues 177–190 (SAGKSAMAASSGTS) the composition is skewed to low complexity.

The protein belongs to the NFYA/HAP2 subunit family. Heterotrimeric transcription factor composed of three components, NF-YA, NF-YB and NF-YC. NF-YB and NF-YC must interact and dimerize for NF-YA association and DNA binding.

It localises to the nucleus. Functionally, stimulates the transcription of various genes by recognizing and binding to a CCAAT motif in promoters. The sequence is that of Nuclear transcription factor Y subunit A-7 (NFYA7) from Arabidopsis thaliana (Mouse-ear cress).